Consider the following 908-residue polypeptide: MGRQGLIHIVILQYKLGGIYPMKAVDIRQMYLEFFKEKGHHHEPSAPLVPINDPSLLWINSGVATLKPYFDGRVIPDNPRITNAQKSIRTNDIENVGKTARHHTFFEMLGNFSIGDYFKKEAIHYAWEFLTDKKWMGFDPELLSITIHPEDQEAYDVWHQEIGIPEERLIRLEGNFWDIGEGPSGPNSEIFYDRGVEYGSDENDPEMYPGGENERYLEIWNLVFSQFNHNPDGTYTPLPKQNIDTGMGLERIVSVVQNVPTNFDTDLFMPIIEKIEEFANRKYKRPSEVDLNEIFGSEEDINTPFKVIADHIRTVAFAIGDGALPSNEGRGYVLRRLLRRAVRYAKQIGIEKPFMFELVPTVGKIMEDFYPEVTEKCEFIQRVIKNEEIRFHETLDGGLAIFNEVAESQKAAGHDFIPGADAFRLYDTYGFPIELTEEYAEEVGMKVDHEGFETAMEEQRERARAARQDVDSMQVQNEVLANLTVASEFVGFDTLVANTEIAAMIVNGQVEKVASEGQEALVILAKTPFYAEMGGQIADSGIISNDSFTAVVKDVQKAPNGQPLHTVIVESGEMHVEDAVQAIVHRDDRNLIIKNHTATHIMQRALKDVLGDHVNQAGSYVGPDRLRFDFSHFGQVTKEELQQIERIVNEKVWDDIEVVIEEMAIDQAKAKGAMALFGEKYGDVVRVVSIGDYSIELCGGIHVKRSSEIGFFKIVSEGGIGAGTRRIEAVTGKVAYEVVKEEEALLNDAAALLKANPKDIVTKVQALQGDYKELQRDNEALSQKIANAHSWGNCRCSTNNWRCHSSFYKSRSKDNNLLRQMMDDLKALMPKAVIVLGAVDGDLSDAMCRGITIINRWQLPCWKYREIWCQKLVVVIGGVRPDMAMAGAKDASKLDEALLSVYDYVKSI.

4 residues coordinate Zn(2+): H596, H600, C698, and H702.

This sequence belongs to the class-II aminoacyl-tRNA synthetase family. Zn(2+) serves as cofactor.

The protein localises to the cytoplasm. It carries out the reaction tRNA(Ala) + L-alanine + ATP = L-alanyl-tRNA(Ala) + AMP + diphosphate. Functionally, catalyzes the attachment of alanine to tRNA(Ala) in a two-step reaction: alanine is first activated by ATP to form Ala-AMP and then transferred to the acceptor end of tRNA(Ala). Also edits incorrectly charged Ser-tRNA(Ala) and Gly-tRNA(Ala) via its editing domain. The sequence is that of Alanine--tRNA ligase from Lysinibacillus sphaericus (strain C3-41).